The following is a 60-amino-acid chain: Three-finger toxin MS3 (60 aa).

Disulfide bonds link cysteine 3/cysteine 22, cysteine 15/cysteine 39, cysteine 41/cysteine 52, and cysteine 53/cysteine 58.

It belongs to the three-finger toxin family. Short-chain subfamily. Type I alpha-neurotoxin sub-subfamily. Expressed by the venom gland.

Its subcellular location is the secreted. Functionally, produces peripheral paralysis by blocking neuromuscular transmission at the postsynaptic site. Binds to and inhibits the endogenous nicotinic acetylcholine receptors (nAChR) in human rhabdomyosarcoma TE 671 cell line with an IC(50) of 346 mM. This neurotoxin is lethal to mice by intraperitoneal injection and to zebrafish by injection at the back of the dorsolateral region. This is Three-finger toxin MS3 from Micrurus surinamensis (Surinam coral snake).